A 259-amino-acid polypeptide reads, in one-letter code: Tryptophan synthase alpha chain (259 aa).

Active-site proton acceptor residues include Glu-35 and Asp-46.

Belongs to the TrpA family. As to quaternary structure, tetramer of two alpha and two beta chains.

The catalysed reaction is (1S,2R)-1-C-(indol-3-yl)glycerol 3-phosphate + L-serine = D-glyceraldehyde 3-phosphate + L-tryptophan + H2O. It functions in the pathway amino-acid biosynthesis; L-tryptophan biosynthesis; L-tryptophan from chorismate: step 5/5. In terms of biological role, the alpha subunit is responsible for the aldol cleavage of indoleglycerol phosphate to indole and glyceraldehyde 3-phosphate. This chain is Tryptophan synthase alpha chain, found in Methanococcus vannielii (strain ATCC 35089 / DSM 1224 / JCM 13029 / OCM 148 / SB).